Here is a 91-residue protein sequence, read N- to C-terminus: Large ribosomal subunit protein uL23c (91 aa).

This sequence belongs to the universal ribosomal protein uL23 family. As to quaternary structure, part of the 50S ribosomal subunit.

The protein resides in the plastid. It is found in the chloroplast. In terms of biological role, binds to 23S rRNA. The sequence is that of Large ribosomal subunit protein uL23c (rpl23) from Physcomitrium patens (Spreading-leaved earth moss).